The chain runs to 1070 residues: DNA-directed RNA polymerase subunit beta (1070 aa).

Belongs to the RNA polymerase beta chain family. As to quaternary structure, in plastids the minimal PEP RNA polymerase catalytic core is composed of four subunits: alpha, beta, beta', and beta''. When a (nuclear-encoded) sigma factor is associated with the core the holoenzyme is formed, which can initiate transcription.

The protein resides in the plastid. It localises to the chloroplast. The enzyme catalyses RNA(n) + a ribonucleoside 5'-triphosphate = RNA(n+1) + diphosphate. In terms of biological role, DNA-dependent RNA polymerase catalyzes the transcription of DNA into RNA using the four ribonucleoside triphosphates as substrates. The chain is DNA-directed RNA polymerase subunit beta from Nicotiana sylvestris (Wood tobacco).